A 620-amino-acid chain; its full sequence is Glutathione-regulated potassium-efflux system protein KefC (620 aa).

12 consecutive transmembrane segments (helical) span residues 4 to 24 (HTLL…PIAV), 26 to 46 (LGLG…PWGL), 54 to 74 (SILH…GLEL), 90 to 110 (GALQ…FLGL), 114 to 134 (VAEL…MQAM), 149 to 169 (FAVL…IPLL), 178 to 198 (LGAF…VVVL), 218 to 238 (VFSA…EEVG), 270 to 290 (GLLL…GTLV), 294 to 314 (LRIL…LWLV), 327 to 347 (WFAV…GAAQ), and 359 to 379 (ALTL…VLLT). The region spanning 399–518 (QPRVIVAGFG…AGVAMPERET (120 aa)) is the RCK N-terminal domain. Positions 599-620 (QGTAEGKHSGEVADEPEVKPSI) are disordered.

Belongs to the monovalent cation:proton antiporter 2 (CPA2) transporter (TC 2.A.37) family. KefC subfamily. As to quaternary structure, homodimer. Interacts with the regulatory subunit KefF.

The protein resides in the cell inner membrane. In terms of biological role, pore-forming subunit of a potassium efflux system that confers protection against electrophiles. Catalyzes K(+)/H(+) antiport. The polypeptide is Glutathione-regulated potassium-efflux system protein KefC (Salmonella paratyphi B (strain ATCC BAA-1250 / SPB7)).